Reading from the N-terminus, the 259-residue chain is Trypsin (259 aa).

An N-terminal signal peptide occupies residues 1-32 (MKHFLRALKRCSVAVATVAIAVVGLQPVTASA). The propeptide at 33–36 (APNP) is activation peptide. The 221-residue stretch at 37–257 (VVGGTRAAQG…FASAIASAAR (221 aa)) folds into the Peptidase S1 domain. Cysteines 58 and 74 form a disulfide. Catalysis depends on charge relay system residues His73 and Asp118. Cystine bridges form between Cys177-Cys192 and Cys204-Cys233. Residue Ser208 is the Charge relay system of the active site.

It belongs to the peptidase S1 family.

The enzyme catalyses Preferential cleavage: Arg-|-Xaa, Lys-|-Xaa.. In Streptomyces griseus, this protein is Trypsin (sprT).